A 191-amino-acid polypeptide reads, in one-letter code: Abscisic acid receptor PYR1 (191 aa).

An START-like region spans residues 23 to 176; the sequence is YQLDPGSCSS…NLQKLATVAE (154 aa). Lys-59 is an abscisate binding site. A Phosphothreonine; by CARK1 modification is found at Thr-78. Positions 85-89 match the Gate loop motif; it reads SGLPA. Abscisate is bound by residues 89–94, 116–122, and Glu-141; these read ANTSTE and RLTNYKS. The Latch loop motif lies at 115–117; it reads HRL.

It belongs to the PYR/PYL/RCAR abscisic acid intracellular receptor family. As to quaternary structure, homodimer. Binds ABA on one subunit only. Interacts with HAB1, AHG3, ABI1 and ABI2 when complexed to ABA, and possibly with other PP2Cs. Binds to CARs protein in an ABA-independent manner, both at the plasma membrane and in the nucleus. Interacts directly with CAR1 and CAR4. Interacts with CARK1 in the cytosol. Interacts with AIP1 in an abscisic acid-dependent manner. Interacts with FREE1 (via N-terminus). Interacts with the E3 ubiquitin-protein ligase RSL1 at the plasma membrane. Ubiquitynated and degraded by the proteasome upon binding to the E3 ubiquitin-protein ligase RSL1 at the plasma membrane. In terms of processing, phosphorylated by CARK1 especially in response to abscisic acid (ABA); this phosphorylation promotes its stability and inhibitory ability to ABI1.

The protein localises to the cytoplasm. It localises to the cytosol. It is found in the nucleus. Its subcellular location is the cell membrane. The protein resides in the vacuole. Its function is as follows. Receptor for abscisic acid (ABA) required for ABA-mediated responses such as stomatal closure and germination inhibition. Inhibits the activity of group-A protein phosphatases type 2C (PP2Cs) when activated by ABA. Can be activated by both (-)-ABA and (+)-ABA. Promotes drought tolerance. The chain is Abscisic acid receptor PYR1 from Arabidopsis thaliana (Mouse-ear cress).